The sequence spans 457 residues: Phosphomethylpyrimidine synthase (457 aa).

Substrate contacts are provided by residues asparagine 80, methionine 109, tyrosine 139, histidine 175, 195-197 (SRG), 236-239 (DSLR), and glutamate 275. Position 279 (histidine 279) interacts with Zn(2+). Tyrosine 302 contacts substrate. Histidine 343 lines the Zn(2+) pocket. Positions 423, 426, and 431 each coordinate [4Fe-4S] cluster.

This sequence belongs to the ThiC family. Requires [4Fe-4S] cluster as cofactor.

The catalysed reaction is 5-amino-1-(5-phospho-beta-D-ribosyl)imidazole + S-adenosyl-L-methionine = 4-amino-2-methyl-5-(phosphooxymethyl)pyrimidine + CO + 5'-deoxyadenosine + formate + L-methionine + 3 H(+). Its pathway is cofactor biosynthesis; thiamine diphosphate biosynthesis. Catalyzes the synthesis of the hydroxymethylpyrimidine phosphate (HMP-P) moiety of thiamine from aminoimidazole ribotide (AIR) in a radical S-adenosyl-L-methionine (SAM)-dependent reaction. The chain is Phosphomethylpyrimidine synthase from Trichormus variabilis (strain ATCC 29413 / PCC 7937) (Anabaena variabilis).